Consider the following 465-residue polypeptide: Phospholipase A1-II 5 (465 aa).

The active-site Acyl-ester intermediate is the serine 233. Catalysis depends on charge relay system residues serine 233, aspartate 297, and histidine 336.

The protein belongs to the AB hydrolase superfamily. Lipase family.

Its subcellular location is the cytoplasm. In terms of biological role, acylhydrolase that catalyzes the hydrolysis of phospholipids at the sn-1 position. The protein is Phospholipase A1-II 5 of Oryza sativa subsp. indica (Rice).